The chain runs to 206 residues: Small ribosomal subunit protein uS4 (206 aa).

Positions Gln96 to Ala157 constitute an S4 RNA-binding domain.

The protein belongs to the universal ribosomal protein uS4 family. As to quaternary structure, part of the 30S ribosomal subunit. Contacts protein S5. The interaction surface between S4 and S5 is involved in control of translational fidelity.

Its function is as follows. One of the primary rRNA binding proteins, it binds directly to 16S rRNA where it nucleates assembly of the body of the 30S subunit. In terms of biological role, with S5 and S12 plays an important role in translational accuracy. The sequence is that of Small ribosomal subunit protein uS4 from Idiomarina loihiensis (strain ATCC BAA-735 / DSM 15497 / L2-TR).